The following is a 95-amino-acid chain: Co-chaperonin GroES (95 aa).

The protein belongs to the GroES chaperonin family. As to quaternary structure, heptamer of 7 subunits arranged in a ring. Interacts with the chaperonin GroEL.

The protein localises to the cytoplasm. Its function is as follows. Together with the chaperonin GroEL, plays an essential role in assisting protein folding. The GroEL-GroES system forms a nano-cage that allows encapsulation of the non-native substrate proteins and provides a physical environment optimized to promote and accelerate protein folding. GroES binds to the apical surface of the GroEL ring, thereby capping the opening of the GroEL channel. The chain is Co-chaperonin GroES from Cereibacter sphaeroides (strain ATCC 17025 / ATH 2.4.3) (Rhodobacter sphaeroides).